The sequence spans 266 residues: Undecaprenyl-diphosphatase (266 aa).

The next 8 helical transmembrane spans lie at methionine 1–isoleucine 21, glutamine 39–phenylalanine 59, serine 83–alanine 103, leucine 111–alanine 131, alanine 149–isoleucine 169, alanine 183–methionine 203, alanine 218–leucine 238, and methionine 246–leucine 266.

This sequence belongs to the UppP family.

The protein localises to the cell inner membrane. The catalysed reaction is di-trans,octa-cis-undecaprenyl diphosphate + H2O = di-trans,octa-cis-undecaprenyl phosphate + phosphate + H(+). Catalyzes the dephosphorylation of undecaprenyl diphosphate (UPP). Confers resistance to bacitracin. In Shewanella amazonensis (strain ATCC BAA-1098 / SB2B), this protein is Undecaprenyl-diphosphatase.